We begin with the raw amino-acid sequence, 235 residues long: Large ribosomal subunit protein uL1 (235 aa).

It belongs to the universal ribosomal protein uL1 family. Part of the 50S ribosomal subunit.

Its function is as follows. Binds directly to 23S rRNA. The L1 stalk is quite mobile in the ribosome, and is involved in E site tRNA release. In terms of biological role, protein L1 is also a translational repressor protein, it controls the translation of the L11 operon by binding to its mRNA. In Solidesulfovibrio magneticus (strain ATCC 700980 / DSM 13731 / RS-1) (Desulfovibrio magneticus), this protein is Large ribosomal subunit protein uL1.